The sequence spans 217 residues: 3,4-dihydroxy-2-butanone 4-phosphate synthase (217 aa).

Residues 37-38 (RE), D42, 150-154 (RGGHT), and E174 each bind D-ribulose 5-phosphate. E38 is a binding site for Mg(2+). H153 provides a ligand contact to Mg(2+).

This sequence belongs to the DHBP synthase family. As to quaternary structure, homodimer. Mg(2+) is required as a cofactor. Mn(2+) serves as cofactor.

The catalysed reaction is D-ribulose 5-phosphate = (2S)-2-hydroxy-3-oxobutyl phosphate + formate + H(+). Its pathway is cofactor biosynthesis; riboflavin biosynthesis; 2-hydroxy-3-oxobutyl phosphate from D-ribulose 5-phosphate: step 1/1. Functionally, catalyzes the conversion of D-ribulose 5-phosphate to formate and 3,4-dihydroxy-2-butanone 4-phosphate. This Salmonella paratyphi A (strain ATCC 9150 / SARB42) protein is 3,4-dihydroxy-2-butanone 4-phosphate synthase.